Here is a 425-residue protein sequence, read N- to C-terminus: Glutamyl-tRNA reductase (425 aa).

Substrate-binding positions include 49 to 52, S109, 114 to 116, and Q120; these read TCNR and EGQ. C50 serves as the catalytic Nucleophile. 189–194 contacts NADP(+); sequence GAGKMS.

It belongs to the glutamyl-tRNA reductase family. In terms of assembly, homodimer.

It carries out the reaction (S)-4-amino-5-oxopentanoate + tRNA(Glu) + NADP(+) = L-glutamyl-tRNA(Glu) + NADPH + H(+). It participates in porphyrin-containing compound metabolism; protoporphyrin-IX biosynthesis; 5-aminolevulinate from L-glutamyl-tRNA(Glu): step 1/2. It functions in the pathway porphyrin-containing compound metabolism; chlorophyll biosynthesis. Functionally, catalyzes the NADPH-dependent reduction of glutamyl-tRNA(Glu) to glutamate 1-semialdehyde (GSA). This chain is Glutamyl-tRNA reductase, found in Picosynechococcus sp. (strain ATCC 27264 / PCC 7002 / PR-6) (Agmenellum quadruplicatum).